The primary structure comprises 393 residues: NAD(P)H-quinone oxidoreductase subunit H, chloroplastic (393 aa).

It belongs to the complex I 49 kDa subunit family. NDH is composed of at least 16 different subunits, 5 of which are encoded in the nucleus.

It is found in the plastid. The protein resides in the chloroplast thylakoid membrane. It catalyses the reaction a plastoquinone + NADH + (n+1) H(+)(in) = a plastoquinol + NAD(+) + n H(+)(out). It carries out the reaction a plastoquinone + NADPH + (n+1) H(+)(in) = a plastoquinol + NADP(+) + n H(+)(out). Its function is as follows. NDH shuttles electrons from NAD(P)H:plastoquinone, via FMN and iron-sulfur (Fe-S) centers, to quinones in the photosynthetic chain and possibly in a chloroplast respiratory chain. The immediate electron acceptor for the enzyme in this species is believed to be plastoquinone. Couples the redox reaction to proton translocation, and thus conserves the redox energy in a proton gradient. In Arabis hirsuta (Hairy rock-cress), this protein is NAD(P)H-quinone oxidoreductase subunit H, chloroplastic.